A 395-amino-acid chain; its full sequence is Succinyl-diaminopimelate desuccinylase (395 aa).

His-74 provides a ligand contact to Zn(2+). Residue Asp-76 is part of the active site. Residue Asp-107 coordinates Zn(2+). The active-site Proton acceptor is Glu-141. Glu-142, Glu-170, and His-368 together coordinate Zn(2+).

Belongs to the peptidase M20A family. DapE subfamily. As to quaternary structure, homodimer. Zn(2+) serves as cofactor. It depends on Co(2+) as a cofactor.

The catalysed reaction is N-succinyl-(2S,6S)-2,6-diaminopimelate + H2O = (2S,6S)-2,6-diaminopimelate + succinate. The protein operates within amino-acid biosynthesis; L-lysine biosynthesis via DAP pathway; LL-2,6-diaminopimelate from (S)-tetrahydrodipicolinate (succinylase route): step 3/3. In terms of biological role, catalyzes the hydrolysis of N-succinyl-L,L-diaminopimelic acid (SDAP), forming succinate and LL-2,6-diaminopimelate (DAP), an intermediate involved in the bacterial biosynthesis of lysine and meso-diaminopimelic acid, an essential component of bacterial cell walls. This chain is Succinyl-diaminopimelate desuccinylase, found in Brucella melitensis biotype 2 (strain ATCC 23457).